We begin with the raw amino-acid sequence, 286 residues long: CBY1-interacting BAR domain-containing protein 1 (286 aa).

A mitochondrion-targeting transit peptide spans 1 to 47 (MLRRNLDERDAQTKQLQDAVTNVEKHFGELCQIFAAYVRKTARLRDK). The BAR-like stretch occupies residues 10–220 (DAQTKQLQDA…NIDEDEDLEV (211 aa)). Positions 107–178 (KMKRDDLKAT…IDNFEKQKIK (72 aa)) form a coiled coil. The disordered stretch occupies residues 258-286 (GQISTCRTRKDQQVEDEDDEELDVTEDEN). Residues 271 to 286 (VEDEDDEELDVTEDEN) show a composition bias toward acidic residues.

This sequence belongs to the CIBAR family. In terms of assembly, homodimer (via BAR-like domain). Heterodimer with FAM92B (via BAR-like domains). Interacts (via BAR-like domain) with CBY1; this interaction is required for targeting FAM92A to centriole and cilium basal body. Interacts (via BAR-like domain) with CBY3; both proteins form a ninefold symmetric structure at the flagellar base; are recruited to the annulus in a mutually dependent manner and regulate annulus positionning. In terms of tissue distribution, expressed in the heart, liver, spleen, lung, kidney, brain and muscle (at protein level). Strongly expressed throughout the developing limb bud, including the progress zone and the apical ectodermal ridge.

It is found in the cytoplasm. The protein localises to the cytoskeleton. Its subcellular location is the microtubule organizing center. It localises to the centrosome. The protein resides in the centriole. It is found in the cilium basal body. The protein localises to the cell projection. Its subcellular location is the cilium. It localises to the nucleus. The protein resides in the mitochondrion inner membrane. It is found in the flagellum. Functionally, plays a critical role in regulating mitochondrial ultrastructure and function by maintaining the integrity of mitochondrial morphology, particularly the organization of cristae. Preferentially binds to negatively charged phospholipids like cardiolipin and phosphatidylinositol 4,5-bisphosphate enhancing its interaction with mitochondrial membranes. Induces membrane curvature and tubulation, which are critical for maintaining mitochondrial ultrastructure and the organization of cristae. Plays a crucial role in ciliogenesis. May play a role in limb development through its role in ciliogenesis. Plays a key role in the correct positioning of the annulus, a septin-based ring structure in the sperm flagellum, serving both as a physical barrier and a membrane diffusion barrier that separates the midpiece (MP) from the principal piece (PP). This positioning is essential for proper sperm motility and function. Interacts with CBY3 to form a complex which localizes to the curved membrane region of the flagellar pocket. By doing so, may provide stability and rigidity to the periannular membrane to prevent membrane deformation. This function is crucial for halting annulus migration at the proximal end of the fibrous sheath-containing PP. The sequence is that of CBY1-interacting BAR domain-containing protein 1 from Mus musculus (Mouse).